The following is a 670-amino-acid chain: Neutral ceramidase (670 aa).

The N-terminal stretch at 1-24 is a signal peptide; it reads MSRSAFTALLLSCVLLALSMPARA. Histidine 61 serves as a coordination point for Mg(2+). Substrate contacts are provided by asparagine 84, glutamine 92, and aspartate 111. Histidine 121 is a Zn(2+) binding site. Serine 130 is a binding site for substrate. Residue histidine 228 coordinates Zn(2+). Serine 274 functions as the Nucleophile in the catalytic mechanism. Cysteine 346 and cysteine 394 are oxidised to a cystine. Glutamate 435 is a binding site for Zn(2+). Tyrosine 469 contacts substrate. Zn(2+) is bound at residue tyrosine 472. Mg(2+) is bound by residues aspartate 603, aspartate 605, and threonine 608. Positions 644–670 are required for correct folding and localization; the sequence is NAKNFWTQKISEIGGSTRSFEVLGTTP.

This sequence belongs to the neutral ceramidase family. Homodimer. Requires Zn(2+) as cofactor. It depends on Mg(2+) as a cofactor.

The protein resides in the secreted. It catalyses the reaction an N-acylsphing-4-enine + H2O = sphing-4-enine + a fatty acid. With respect to regulation, inhibited by EDTA, EGTA and D/L-sphinganine D-erythro-sphingosine. L-erythro-sphingosine is a less powerful inhibitor. Stimulated by glycerophospholipids: cardiolipin is the most effective, followed by phosphatidic acid, phosphatidylethanolamine and phosphatidylglycerol, whereas phosphatidylcholine, lysophosphatidic acid and diacylglycerol are less effective. In terms of biological role, catalyzes the cleavage of the N-acyl linkage of the ceramides (Cers) to yield sphingosine (Sph) and free fatty acid at an optimal pH of 8-9. Also catalyzes the synthesis of Cers from Sph and fatty acid. The polypeptide is Neutral ceramidase (Pseudomonas aeruginosa (strain ATCC 15692 / DSM 22644 / CIP 104116 / JCM 14847 / LMG 12228 / 1C / PRS 101 / PAO1)).